The chain runs to 225 residues: Ureidoacrylate amidohydrolase RutB (225 aa).

Aspartate 22 (proton acceptor) is an active-site residue. Lysine 131 is a catalytic residue. Cysteine 164 acts as the Nucleophile in catalysis.

It belongs to the isochorismatase family. RutB subfamily.

The enzyme catalyses (Z)-3-ureidoacrylate + H2O + H(+) = (Z)-3-aminoacrylate + NH4(+) + CO2. It catalyses the reaction (Z)-3-ureidoacrylate + H2O = (Z)-3-aminoacrylate + carbamate + H(+). It carries out the reaction (Z)-2-methylureidoacrylate + H2O + H(+) = (Z)-2-methylaminoacrylate + NH4(+) + CO2. In terms of biological role, hydrolyzes ureidoacrylate to form aminoacrylate and carbamate. The carbamate hydrolyzes spontaneously, thereby releasing one of the nitrogen atoms of the pyrimidine ring as ammonia and one of its carbon atoms as CO2. The polypeptide is Ureidoacrylate amidohydrolase RutB (Caulobacter vibrioides (strain ATCC 19089 / CIP 103742 / CB 15) (Caulobacter crescentus)).